We begin with the raw amino-acid sequence, 73 residues long: Sec-independent protein translocase protein TatA (73 aa).

A helical transmembrane segment spans residues 1-21; that stretch reads MGSFSIWHWMIVLVIVLLVFG.

This sequence belongs to the TatA/E family. As to quaternary structure, the Tat system comprises two distinct complexes: a TatABC complex, containing multiple copies of TatA, TatB and TatC subunits, and a separate TatA complex, containing only TatA subunits. Substrates initially bind to the TatABC complex, which probably triggers association of the separate TatA complex to form the active translocon.

It is found in the cell inner membrane. In terms of biological role, part of the twin-arginine translocation (Tat) system that transports large folded proteins containing a characteristic twin-arginine motif in their signal peptide across membranes. TatA could form the protein-conducting channel of the Tat system. This is Sec-independent protein translocase protein TatA from Mesorhizobium japonicum (strain LMG 29417 / CECT 9101 / MAFF 303099) (Mesorhizobium loti (strain MAFF 303099)).